The primary structure comprises 307 residues: Acetyl-coenzyme A carboxylase carboxyl transferase subunit beta (307 aa).

The CoA carboxyltransferase N-terminal domain maps to 25–294 (VWTKCTSCEQ…PLVVPIEQPK (270 aa)). Zn(2+) contacts are provided by cysteine 29, cysteine 32, cysteine 48, and cysteine 51. The C4-type zinc finger occupies 29-51 (CTSCEQVLYHADLERNLEVCPKC).

This sequence belongs to the AccD/PCCB family. As to quaternary structure, acetyl-CoA carboxylase is a heterohexamer composed of biotin carboxyl carrier protein (AccB), biotin carboxylase (AccC) and two subunits each of ACCase subunit alpha (AccA) and ACCase subunit beta (AccD). The cofactor is Zn(2+).

The protein localises to the cytoplasm. The catalysed reaction is N(6)-carboxybiotinyl-L-lysyl-[protein] + acetyl-CoA = N(6)-biotinyl-L-lysyl-[protein] + malonyl-CoA. The protein operates within lipid metabolism; malonyl-CoA biosynthesis; malonyl-CoA from acetyl-CoA: step 1/1. In terms of biological role, component of the acetyl coenzyme A carboxylase (ACC) complex. Biotin carboxylase (BC) catalyzes the carboxylation of biotin on its carrier protein (BCCP) and then the CO(2) group is transferred by the transcarboxylase to acetyl-CoA to form malonyl-CoA. The polypeptide is Acetyl-coenzyme A carboxylase carboxyl transferase subunit beta (Photobacterium profundum (strain SS9)).